The sequence spans 597 residues: MSILQKLENSAAAAVKALYGTDPMEGQIQLQKTKREFKGHLTLVVFPFVKMSRKSPEATATEIGEWLLANESAVSAIEVVKGFLNLTIAPRVWLELLNEIRADINFGHKVATEDSPLVMVEYSSPNTNKPLHLGHVRNNLLGYSLSEIMKANGYRVVKTNIVNDRGIHICKSMLAWQKWGDGVTPEKAGKKGDHLIGDFYVLFDKHYKAELNSLMAEGKSKEEAEAASTLMAEAREMLRLWEAGDEKVVDLWRTMNQWVYDGFDATYKMMGVDFDKIYYESETYLVGKEEVLRGLEEGLFVKHSDGSVWADLTKDGLDEKLLLRADGTSVYMTQDIGTAKMRFNDYPINRMIYVVGNEQNYHFQVLSILLDRLGFEFGKGLVHFSYGMVELPEGKMKSREGTVVDADDLMDEMIRTAAEIAAEAGKAAEMDEEESREVARIVGLGSLKYFILKVDPRKNMTFNPKESIDFNGNTGSFVQYTYARIRSLMRRAEAAGYDIPSQLPTDLPLSEKEEALIQKVSEYAEVVSEAGHSYSPALIANYIYDLVKEYNQFYHDFSVLKEEDERIRAFRLALSEVVALTMRKGFALLGIEMPERM.

The 'HIGH' region motif lies at P125–H135.

The protein belongs to the class-I aminoacyl-tRNA synthetase family. As to quaternary structure, monomer.

It localises to the cytoplasm. The catalysed reaction is tRNA(Arg) + L-arginine + ATP = L-arginyl-tRNA(Arg) + AMP + diphosphate. This is Arginine--tRNA ligase from Porphyromonas gingivalis (strain ATCC BAA-308 / W83).